Reading from the N-terminus, the 76-residue chain is Exodeoxyribonuclease 7 small subunit (76 aa).

It belongs to the XseB family. Heterooligomer composed of large and small subunits.

It is found in the cytoplasm. The catalysed reaction is Exonucleolytic cleavage in either 5'- to 3'- or 3'- to 5'-direction to yield nucleoside 5'-phosphates.. Functionally, bidirectionally degrades single-stranded DNA into large acid-insoluble oligonucleotides, which are then degraded further into small acid-soluble oligonucleotides. In Geotalea daltonii (strain DSM 22248 / JCM 15807 / FRC-32) (Geobacter daltonii), this protein is Exodeoxyribonuclease 7 small subunit.